The chain runs to 503 residues: E3 ubiquitin-protein ligase ariadne-1 (503 aa).

Positions 1–11 (MDSDNDNDFCD) are enriched in acidic residues. The interval 1–40 (MDSDNDNDFCDNVDSGNVSSGDDGDDDFGMEVDLPSSADR) is disordered. Low complexity predominate over residues 12–21 (NVDSGNVSSG). Residues 129–340 (QCEECEICFS…SSWYNCNRYD (212 aa)) form a TRIAD supradomain region. Residues Cys-133, Cys-136, Cys-150, His-152, Cys-155, Cys-158, Cys-178, Cys-183, Cys-223, Cys-228, Cys-244, Cys-246, Cys-251, Cys-254, His-259, Cys-264, Cys-291, and Cys-294 each coordinate Zn(2+). An RING-type 1 zinc finger spans residues 133-183 (CEICFSQLPPDSMAGLECGHRFCMPCWHEYLSTKIVAEGLGQTISCAAHGC). An important for interaction with Ubc10 region spans residues 133-201 (CEICFSQLPP…VANLVTDARV (69 aa)). The IBR-type zinc finger occupies 203 to 264 (VKYQQLITNS…GENWHDPVKC (62 aa)). The RING-type 2; atypical zinc-finger motif lies at 291–322 (CPRCSVTIEKDGGCNHMVCKNQNCKNEFCWVC). Cys-304 is a catalytic residue. Positions 309, 314, 319, 322, 329, and 336 each coordinate Zn(2+). Residues 341-361 (EDEAKTARDAQEKLRSSLARY) are a coiled coil.

Belongs to the RBR family. Ariadne subfamily. In terms of assembly, can form homodimers. Interacts (via RING-type 1 zinc finger) with Ubc10. Interacts with the LINC complex member koi. Interacts with park. Interacts with ari-2. Specifically interacts with isoform ECR-A of EcR. In terms of processing, autophosphorylated. As to expression, widely expressed, with prominent levels in the nervous system and female gonads.

It is found in the cytoplasm. The protein resides in the nucleus. The enzyme catalyses [E2 ubiquitin-conjugating enzyme]-S-ubiquitinyl-L-cysteine + [acceptor protein]-L-lysine = [E2 ubiquitin-conjugating enzyme]-L-cysteine + [acceptor protein]-N(6)-ubiquitinyl-L-lysine.. Atypical E3 ubiquitin-protein ligase, which catalyzes ubiquitination of target proteins together with ubiquitin-conjugating enzyme E2 Ubc10. Controls the subcellular localization and morphology of muscle nuclei (myonuclei) by regulating the protein levels and distribution of the LINC (LInker of Nucleoskeleton and Cytoskeleton) complex. Functions by mediating the monoubiquitination of the LINC complex subunit koi leading to its subsequent proteasomal degradation. Appears to function, at least partially redundantly, with the RBR E3 ligase family member park in nuclear localization and morphology. Likely to function in metamorphosis by regulating the proteins levels of EcR isoform A (ECR-A) and its heterodimeric partner usp, via the ubiquitination and subsequent degradation of ECR-A. The polypeptide is E3 ubiquitin-protein ligase ariadne-1 (Drosophila melanogaster (Fruit fly)).